Consider the following 432-residue polypeptide: Peptidase B (432 aa).

Mn(2+) contacts are provided by Lys196 and Asp201. Lys208 is an active-site residue. Mn(2+) is bound by residues Asp219, Asp278, and Glu280. Residue Arg282 is part of the active site.

This sequence belongs to the peptidase M17 family. In terms of assembly, homohexamer. Mn(2+) is required as a cofactor.

Its subcellular location is the cytoplasm. It catalyses the reaction Release of an N-terminal amino acid, Xaa, from a peptide or arylamide. Xaa is preferably Glu or Asp but may be other amino acids, including Leu, Met, His, Cys and Gln.. Probably plays an important role in intracellular peptide degradation. The protein is Peptidase B of Yersinia pestis bv. Antiqua (strain Antiqua).